The following is a 247-amino-acid chain: Mannose-P-dolichol utilization defect 1 protein (247 aa).

Residue A2 is modified to N-acetylalanine. 7 helical membrane-spanning segments follow: residues 37–57 (CLKILLSKGLGLGIVAGSLLV), 74–94 (LSLQSVMLELVALTGTMVYSI), 100–120 (FSSWGEALFLMLQTITICFLV), 128–145 (VKGVAFLACYGLVLLVLL), 151–171 (LTVVTLLQASNVPAVVVGRLL), 185–205 (LSAITVFLLFGGSLARIFTSI), and 213–233 (MAGTFVVSSLCNGLIAAQLLF). The PQ-loop 1 domain maps to 39 to 105 (KILLSKGLGL…NNFPFSSWGE (67 aa)). The 58-residue stretch at 159–216 (ASNVPAVVVGRLLQAATNYHNGHTGQLSAITVFLLFGGSLARIFTSIQETGDPLMAGT) folds into the PQ-loop 2 domain.

This sequence belongs to the MPDU1 (TC 2.A.43.3) family.

It is found in the membrane. Its function is as follows. Required for normal utilization of mannose-dolichol phosphate (Dol-P-Man) in the synthesis of N-linked and O-linked oligosaccharides and GPI anchors. The sequence is that of Mannose-P-dolichol utilization defect 1 protein (MPDU1) from Homo sapiens (Human).